A 524-amino-acid polypeptide reads, in one-letter code: Probable cytosol aminopeptidase (524 aa).

The Mn(2+) site is built by K288 and D293. The active site involves K300. Mn(2+) contacts are provided by D311, D370, and E372. R374 is an active-site residue.

Belongs to the peptidase M17 family. Requires Mn(2+) as cofactor.

It is found in the cytoplasm. It carries out the reaction Release of an N-terminal amino acid, Xaa-|-Yaa-, in which Xaa is preferably Leu, but may be other amino acids including Pro although not Arg or Lys, and Yaa may be Pro. Amino acid amides and methyl esters are also readily hydrolyzed, but rates on arylamides are exceedingly low.. It catalyses the reaction Release of an N-terminal amino acid, preferentially leucine, but not glutamic or aspartic acids.. Functionally, presumably involved in the processing and regular turnover of intracellular proteins. Catalyzes the removal of unsubstituted N-terminal amino acids from various peptides. This is Probable cytosol aminopeptidase (pepA) from Mycobacterium leprae (strain TN).